The chain runs to 456 residues: Bifunctional protein GlmU (456 aa).

Residues 1 to 229 (MLNSAMSVVI…ISETDGVNNR (229 aa)) form a pyrophosphorylase region. UDP-N-acetyl-alpha-D-glucosamine contacts are provided by residues 11-14 (LAAG), Lys25, Gln76, 81-82 (GT), 103-105 (YGD), Gly140, Glu154, Asn169, and Asn227. Residue Asp105 coordinates Mg(2+). Residue Asn227 participates in Mg(2+) binding. Residues 230 to 250 (LQLSRLERIYQAEQAEKLLLS) are linker. Residues 251–456 (GVMLRDPARF…QGWQRPVKKK (206 aa)) form an N-acetyltransferase region. Residues Arg333 and Lys351 each coordinate UDP-N-acetyl-alpha-D-glucosamine. The active-site Proton acceptor is His363. UDP-N-acetyl-alpha-D-glucosamine is bound by residues Tyr366 and Asn377. Acetyl-CoA-binding positions include Ala380, 386-387 (NY), Ser405, Ala423, and Arg440.

This sequence in the N-terminal section; belongs to the N-acetylglucosamine-1-phosphate uridyltransferase family. In the C-terminal section; belongs to the transferase hexapeptide repeat family. Homotrimer. Mg(2+) is required as a cofactor.

It is found in the cytoplasm. The enzyme catalyses alpha-D-glucosamine 1-phosphate + acetyl-CoA = N-acetyl-alpha-D-glucosamine 1-phosphate + CoA + H(+). It catalyses the reaction N-acetyl-alpha-D-glucosamine 1-phosphate + UTP + H(+) = UDP-N-acetyl-alpha-D-glucosamine + diphosphate. It functions in the pathway nucleotide-sugar biosynthesis; UDP-N-acetyl-alpha-D-glucosamine biosynthesis; N-acetyl-alpha-D-glucosamine 1-phosphate from alpha-D-glucosamine 6-phosphate (route II): step 2/2. The protein operates within nucleotide-sugar biosynthesis; UDP-N-acetyl-alpha-D-glucosamine biosynthesis; UDP-N-acetyl-alpha-D-glucosamine from N-acetyl-alpha-D-glucosamine 1-phosphate: step 1/1. It participates in bacterial outer membrane biogenesis; LPS lipid A biosynthesis. Functionally, catalyzes the last two sequential reactions in the de novo biosynthetic pathway for UDP-N-acetylglucosamine (UDP-GlcNAc). The C-terminal domain catalyzes the transfer of acetyl group from acetyl coenzyme A to glucosamine-1-phosphate (GlcN-1-P) to produce N-acetylglucosamine-1-phosphate (GlcNAc-1-P), which is converted into UDP-GlcNAc by the transfer of uridine 5-monophosphate (from uridine 5-triphosphate), a reaction catalyzed by the N-terminal domain. This chain is Bifunctional protein GlmU, found in Salmonella dublin (strain CT_02021853).